A 505-amino-acid chain; its full sequence is Glycerol kinase 1 (505 aa).

Thr-13 provides a ligand contact to ADP. Positions 13, 14, and 15 each coordinate ATP. Thr-13 is a sn-glycerol 3-phosphate binding site. Arg-17 is an ADP binding site. Residues Arg-83, Glu-84, and Tyr-135 each contribute to the sn-glycerol 3-phosphate site. The glycerol site is built by Arg-83, Glu-84, and Tyr-135. The residue at position 231 (His-231) is a Phosphohistidine; by HPr. Asp-245 contacts sn-glycerol 3-phosphate. Asp-245 and Gln-246 together coordinate glycerol. The ADP site is built by Thr-267 and Gly-310. ATP-binding residues include Thr-267, Gly-310, Gln-314, and Gly-411. Positions 411 and 415 each coordinate ADP.

The protein belongs to the FGGY kinase family. Homotetramer and homodimer (in equilibrium). Post-translationally, the phosphoenolpyruvate-dependent sugar phosphotransferase system (PTS), including enzyme I, and histidine-containing protein (HPr) are required for the phosphorylation, which leads to the activation of the enzyme.

It catalyses the reaction glycerol + ATP = sn-glycerol 3-phosphate + ADP + H(+). Its pathway is polyol metabolism; glycerol degradation via glycerol kinase pathway; sn-glycerol 3-phosphate from glycerol: step 1/1. With respect to regulation, activated by phosphorylation and inhibited by fructose 1,6-bisphosphate (FBP). In terms of biological role, key enzyme in the regulation of glycerol uptake and metabolism. Catalyzes the phosphorylation of glycerol to yield sn-glycerol 3-phosphate. In Lactiplantibacillus plantarum (strain ATCC BAA-793 / NCIMB 8826 / WCFS1) (Lactobacillus plantarum), this protein is Glycerol kinase 1.